The following is a 1047-amino-acid chain: FACT complex subunit SPT16 (1047 aa).

Ala2 is subject to N-acetylalanine. Lys139 is modified (N6-acetyllysine). Ser188 carries the phosphoserine modification. Lys196 and Lys223 each carry N6-acetyllysine. Ser455 carries the phosphoserine modification. Residues 465–507 (RNEMTAEEKRRAHQKELAAQLNEEAKRRLTEQKGEQQIQKARK) are a coiled coil. Residues 491–518 (RRLTEQKGEQQIQKARKSNVSYKNPSLM) form a disordered region. Lys497 is covalently cross-linked (Glycyl lysine isopeptide (Lys-Gly) (interchain with G-Cter in SUMO2)). The span at 499 to 514 (EQQIQKARKSNVSYKN) shows a compositional bias: polar residues. Residue Ser508 is modified to Phosphoserine. Lys513 is subject to N6-acetyllysine; alternate. Residue Lys513 forms a Glycyl lysine isopeptide (Lys-Gly) (interchain with G-Cter in SUMO2); alternate linkage. Lys647 is covalently cross-linked (Glycyl lysine isopeptide (Lys-Gly) (interchain with G-Cter in SUMO2)). Phosphoserine occurs at positions 650 and 658. N6-acetyllysine occurs at positions 732 and 786. Position 903 is a phosphothreonine (Thr903). Residue Lys904 is modified to N6-acetyllysine. Positions 918 to 1047 (EQGGWSFLEP…SSAPPKKKRK (130 aa)) are disordered. Positions 927-973 (PEGEGSDAEDGDSESEIEDETFNPSEDDYEEEEEDSDEDYSSEAEES) are enriched in acidic residues. 4 positions are modified to phosphoserine: Ser979, Ser982, Ser986, and Ser1015. The segment covering 985-1005 (ESGKDWDELEEEARKADRESR) has biased composition (basic and acidic residues). The segment covering 1024–1039 (VHSSGRGSNRGSRHSS) has biased composition (low complexity).

It belongs to the peptidase M24 family. SPT16 subfamily. As to quaternary structure, interacts with MYOG (via C-terminal region). Component of the FACT complex, a stable heterodimer of SSRP1 and SUPT16H. Also a component of a CK2-SPT16-SSRP1 complex which forms following UV irradiation, composed of SSRP1, SUPT16H, CSNK2A1, CSNK2A2 and CSNK2B. Interacts with NEK9. Binds to histone H2A-H2B. Identified in a centromere complex containing histones H2A, H2B and H4, and at least CENPA, CENPB, CENPC, CENPT, CENPN, HJURP, SUPT16H, SSRP1 and RSF1. Interacts with GTF2E2. Post-translationally, ADP-ribosylated. ADP-ribosylation by PARP1 is induced by genotoxic stress and correlates with dissociation of FACT from chromatin. In terms of tissue distribution, widely expressed. Expressed in brain, liver, heart, kidneys, lungs, spleen, thymus, ovary, and testes, with highest levels of expression observed in thymus.

It is found in the nucleus. Its subcellular location is the chromosome. In terms of biological role, component of the FACT complex, a general chromatin factor that acts to reorganize nucleosomes. The FACT complex is involved in multiple processes that require DNA as a template such as mRNA elongation, DNA replication and DNA repair. During transcription elongation the FACT complex acts as a histone chaperone that both destabilizes and restores nucleosomal structure. It facilitates the passage of RNA polymerase II and transcription by promoting the dissociation of one histone H2A-H2B dimer from the nucleosome, then subsequently promotes the reestablishment of the nucleosome following the passage of RNA polymerase II. The FACT complex is probably also involved in phosphorylation of 'Ser-392' of p53/TP53 via its association with CK2 (casein kinase II). In Mus musculus (Mouse), this protein is FACT complex subunit SPT16 (Supt16h).